We begin with the raw amino-acid sequence, 157 residues long: SsrA-binding protein (157 aa).

A disordered region spans residues leucine 133–glycine 157. Positions aspartate 135–glycine 157 are enriched in basic and acidic residues.

The protein belongs to the SmpB family.

The protein resides in the cytoplasm. Required for rescue of stalled ribosomes mediated by trans-translation. Binds to transfer-messenger RNA (tmRNA), required for stable association of tmRNA with ribosomes. tmRNA and SmpB together mimic tRNA shape, replacing the anticodon stem-loop with SmpB. tmRNA is encoded by the ssrA gene; the 2 termini fold to resemble tRNA(Ala) and it encodes a 'tag peptide', a short internal open reading frame. During trans-translation Ala-aminoacylated tmRNA acts like a tRNA, entering the A-site of stalled ribosomes, displacing the stalled mRNA. The ribosome then switches to translate the ORF on the tmRNA; the nascent peptide is terminated with the 'tag peptide' encoded by the tmRNA and targeted for degradation. The ribosome is freed to recommence translation, which seems to be the essential function of trans-translation. In Methylobacterium sp. (strain 4-46), this protein is SsrA-binding protein.